Reading from the N-terminus, the 468-residue chain is Ribosomal lysine N-methyltransferase 4 (468 aa).

In terms of domain architecture, SET spans 22–302; the sequence is EKIGLNDYRH…KGEQLWNTYG (281 aa). Positions 188-225 are disordered; it reads ISNENEKSAAETSIKEDKNGDAAKKNEGSANQDDEKLH. An S-adenosyl-L-methionine-binding site is contributed by Tyr301.

It belongs to the class V-like SAM-binding methyltransferase superfamily. Histone-lysine methyltransferase family. SETD6 subfamily.

The protein localises to the nucleus. S-adenosyl-L-methionine-dependent protein-lysine N-methyltransferase that monomethylates 60S ribosomal protein L42 (rpl42) at 'Lys-55'. This chain is Ribosomal lysine N-methyltransferase 4, found in Schizosaccharomyces pombe (strain 972 / ATCC 24843) (Fission yeast).